We begin with the raw amino-acid sequence, 376 residues long: Putative peptide import ATP-binding protein BMEII0205 (376 aa).

Residues 1–25 are disordered; the sequence is MPLRPALHLRTGKLRQTPTHNEPDG. The ABC transporter domain occupies 64–314; the sequence is VRTDDLVRDF…PLHPYSRALL (251 aa). Residue 106–113 coordinates ATP; the sequence is GESGSGKS.

This sequence belongs to the ABC transporter superfamily. As to quaternary structure, the complex is composed of two ATP-binding proteins (BMEII0205 and BMEII0206), two transmembrane proteins (BMEII0207/BMEII0208 and BMEII0209) and a solute-binding protein (BMEII0210).

It is found in the cell inner membrane. Probably part of an ABC transporter complex that could be involved in peptide import. Probably responsible for energy coupling to the transport system. The protein is Putative peptide import ATP-binding protein BMEII0205 of Brucella melitensis biotype 1 (strain ATCC 23456 / CCUG 17765 / NCTC 10094 / 16M).